The following is a 592-amino-acid chain: Peroxisomal targeting signal receptor (592 aa).

C10 participates in a covalent cross-link: Glycyl cysteine thioester (Cys-Gly) (interchain with G-Cter in ubiquitin). The tract at residues 11–33 (SVNGNAVAQFNKHTQQDRSLQQQ) is amphipathic helix 1 (AH1). K22 participates in a covalent cross-link: Glycyl lysine isopeptide (Lys-Gly) (interchain with G-Cter in ubiquitin). The segment covering 22–46 (KHTQQDRSLQQQVANQHGNVAQNQG) has biased composition (polar residues). The tract at residues 22–49 (KHTQQDRSLQQQVANQHGNVAQNQGFKK) is disordered. The interval 58 to 76 (RANLDQFMNNGAPQNSFQF) is amphipathic helix 2 (AH2). 3 consecutive short sequence motifs (wxxxF/Y motif) follow at residues 100–104 (WSQDF), 128–132 (WASEF), and 185–189 (WENQF). The tract at residues 223-239 (FQEVWDSLNSESFENDF) is amphipathic helix 4 (AH4). The WxxxF/Y motif 4 signature appears at 262–266 (WEKDF). 5 TPR repeats span residues 295–329 (DQDP…DENH), 330–363 (VDAW…HPEN), 440–473 (ADVQ…RPDD), 475–507 (ILWN…KPTF), and 509–541 (RARY…HQVE).

This sequence belongs to the peroxisomal targeting signal receptor family. In terms of assembly, interacts (via WxxxF/Y and LVxEF motifs) with PEX14; promoting translocation through the PEX13-PEX14 docking complex. Monoubiquitinated at Cys-10 by PEX2 during PEX5 passage through the retrotranslocation channel: monoubiquitination acts as a signal for PEX5 extraction and is required for proper export from peroxisomes and recycling. When PEX5 recycling is compromised, polyubiquitinated at Lys-22 by PEX10 during its passage through the retrotranslocation channel, leading to its degradation.

It localises to the cytoplasm. Its subcellular location is the cytosol. It is found in the peroxisome matrix. Receptor that mediates peroxisomal import of proteins containing a C-terminal PTS1-type tripeptide peroxisomal targeting signal (SKL-type). Binds to cargo proteins containing a PTS1 peroxisomal targeting signal in the cytosol, and translocates them into the peroxisome matrix by passing through the PEX13-PEX14 docking complex along with cargo proteins. PEX5 receptor is then retrotranslocated into the cytosol, leading to release of bound cargo in the peroxisome matrix, and reset for a subsequent peroxisome import cycle. In Candida albicans (strain SC5314 / ATCC MYA-2876) (Yeast), this protein is Peroxisomal targeting signal receptor (PEX5).